The primary structure comprises 194 residues: NADH-quinone oxidoreductase subunit B 1 (194 aa).

Residues Cys73, Cys74, Cys138, and Cys168 each contribute to the [4Fe-4S] cluster site.

This sequence belongs to the complex I 20 kDa subunit family. As to quaternary structure, NDH-1 is composed of 14 different subunits. Subunits NuoB, C, D, E, F, and G constitute the peripheral sector of the complex. The cofactor is [4Fe-4S] cluster.

Its subcellular location is the cell inner membrane. The enzyme catalyses a quinone + NADH + 5 H(+)(in) = a quinol + NAD(+) + 4 H(+)(out). Its function is as follows. NDH-1 shuttles electrons from NADH, via FMN and iron-sulfur (Fe-S) centers, to quinones in the respiratory chain. The immediate electron acceptor for the enzyme in this species is believed to be ubiquinone. Couples the redox reaction to proton translocation (for every two electrons transferred, four hydrogen ions are translocated across the cytoplasmic membrane), and thus conserves the redox energy in a proton gradient. This Rhizobium etli (strain CIAT 652) protein is NADH-quinone oxidoreductase subunit B 1.